Here is a 247-residue protein sequence, read N- to C-terminus: 1-(5-phosphoribosyl)-5-[(5-phosphoribosylamino)methylideneamino] imidazole-4-carboxamide isomerase (247 aa).

The Proton acceptor role is filled by D8. D129 functions as the Proton donor in the catalytic mechanism.

This sequence belongs to the HisA/HisF family.

It is found in the cytoplasm. The enzyme catalyses 1-(5-phospho-beta-D-ribosyl)-5-[(5-phospho-beta-D-ribosylamino)methylideneamino]imidazole-4-carboxamide = 5-[(5-phospho-1-deoxy-D-ribulos-1-ylimino)methylamino]-1-(5-phospho-beta-D-ribosyl)imidazole-4-carboxamide. Its pathway is amino-acid biosynthesis; L-histidine biosynthesis; L-histidine from 5-phospho-alpha-D-ribose 1-diphosphate: step 4/9. In Rhodospirillum centenum (strain ATCC 51521 / SW), this protein is 1-(5-phosphoribosyl)-5-[(5-phosphoribosylamino)methylideneamino] imidazole-4-carboxamide isomerase.